The chain runs to 185 residues: Ribonuclease HII (185 aa).

One can recognise an RNase H type-2 domain in the interval 1-185 (MIILGIDEAG…KSYKPIQLLL (185 aa)). Residues aspartate 7, glutamate 8, and aspartate 99 each contribute to the a divalent metal cation site.

Belongs to the RNase HII family. The cofactor is Mn(2+). Mg(2+) is required as a cofactor.

The protein localises to the cytoplasm. The catalysed reaction is Endonucleolytic cleavage to 5'-phosphomonoester.. Functionally, endonuclease that specifically degrades the RNA of RNA-DNA hybrids. The chain is Ribonuclease HII from Francisella tularensis subsp. novicida (strain U112).